The primary structure comprises 86 residues: Neurotoxin 8-related gene product 1/2/3 (86 aa).

Residues 1–19 form the signal peptide; sequence MNYLTMISLALLVMTGVES. The 63-residue stretch at 22 to 84 folds into the LCN-type CS-alpha/beta domain; the sequence is RDAYIADNKN…VPIKVPGKCN (63 aa). Intrachain disulfides connect cysteine 32-cysteine 83, cysteine 36-cysteine 56, cysteine 42-cysteine 66, and cysteine 46-cysteine 68. Asparagine 84 carries the post-translational modification Asparagine amide.

The protein belongs to the long (4 C-C) scorpion toxin superfamily. Sodium channel inhibitor family. Alpha subfamily. As to expression, expressed by the venom gland.

Its subcellular location is the secreted. Its function is as follows. Binds voltage-dependently at site-3 of sodium channels (Nav) and inhibits the inactivation of the activated channels, thereby blocking neuronal transmission. The sequence is that of Neurotoxin 8-related gene product 1/2/3 (NTVIIIrgp1) from Androctonus mauritanicus mauritanicus (Scorpion).